Here is a 148-residue protein sequence, read N- to C-terminus: SsrA-binding protein (148 aa).

Residues 123-148 (KLHDKRETEKKRDWEREKARIMRSAT) are disordered. The segment covering 126 to 142 (DKRETEKKRDWEREKAR) has biased composition (basic and acidic residues).

This sequence belongs to the SmpB family.

The protein localises to the cytoplasm. Required for rescue of stalled ribosomes mediated by trans-translation. Binds to transfer-messenger RNA (tmRNA), required for stable association of tmRNA with ribosomes. tmRNA and SmpB together mimic tRNA shape, replacing the anticodon stem-loop with SmpB. tmRNA is encoded by the ssrA gene; the 2 termini fold to resemble tRNA(Ala) and it encodes a 'tag peptide', a short internal open reading frame. During trans-translation Ala-aminoacylated tmRNA acts like a tRNA, entering the A-site of stalled ribosomes, displacing the stalled mRNA. The ribosome then switches to translate the ORF on the tmRNA; the nascent peptide is terminated with the 'tag peptide' encoded by the tmRNA and targeted for degradation. The ribosome is freed to recommence translation, which seems to be the essential function of trans-translation. The polypeptide is SsrA-binding protein (Burkholderia pseudomallei (strain 1710b)).